The primary structure comprises 180 residues: Large ribosomal subunit protein uL5 (180 aa).

It belongs to the universal ribosomal protein uL5 family. In terms of assembly, part of the 50S ribosomal subunit; part of the 5S rRNA/L5/L18/L25 subcomplex. Contacts the 5S rRNA and the P site tRNA. Forms a bridge to the 30S subunit in the 70S ribosome.

In terms of biological role, this is one of the proteins that bind and probably mediate the attachment of the 5S RNA into the large ribosomal subunit, where it forms part of the central protuberance. In the 70S ribosome it contacts protein S13 of the 30S subunit (bridge B1b), connecting the 2 subunits; this bridge is implicated in subunit movement. Contacts the P site tRNA; the 5S rRNA and some of its associated proteins might help stabilize positioning of ribosome-bound tRNAs. The polypeptide is Large ribosomal subunit protein uL5 (Streptococcus thermophilus (strain CNRZ 1066)).